Reading from the N-terminus, the 156-residue chain is Small ribosomal subunit protein uS7 (156 aa).

Belongs to the universal ribosomal protein uS7 family. As to quaternary structure, part of the 30S ribosomal subunit. Contacts proteins S9 and S11.

In terms of biological role, one of the primary rRNA binding proteins, it binds directly to 16S rRNA where it nucleates assembly of the head domain of the 30S subunit. Is located at the subunit interface close to the decoding center, probably blocks exit of the E-site tRNA. This is Small ribosomal subunit protein uS7 from Prochlorococcus marinus subsp. pastoris (strain CCMP1986 / NIES-2087 / MED4).